A 363-amino-acid chain; its full sequence is NADH-quinone oxidoreductase subunit H (363 aa).

9 helical membrane-spanning segments follow: residues 62 to 82 (GPMY…KLLF), 94 to 114 (AIFV…WAVV), 127 to 147 (VGLL…ILAG), 166 to 186 (VVSY…AAGS), 202 to 222 (FFDW…VSGV), 239 to 257 (IVAG…LFFL), 264 to 286 (ILVS…QGWV), 293 to 313 (LIDW…LFFA), and 339 to 359 (FIPL…SGVI).

Belongs to the complex I subunit 1 family. As to quaternary structure, NDH-1 is composed of 14 different subunits. Subunits NuoA, H, J, K, L, M, N constitute the membrane sector of the complex.

It is found in the cell inner membrane. It catalyses the reaction a quinone + NADH + 5 H(+)(in) = a quinol + NAD(+) + 4 H(+)(out). In terms of biological role, NDH-1 shuttles electrons from NADH, via FMN and iron-sulfur (Fe-S) centers, to quinones in the respiratory chain. The immediate electron acceptor for the enzyme in this species is believed to be ubiquinone. Couples the redox reaction to proton translocation (for every two electrons transferred, four hydrogen ions are translocated across the cytoplasmic membrane), and thus conserves the redox energy in a proton gradient. This subunit may bind ubiquinone. This chain is NADH-quinone oxidoreductase subunit H, found in Xylella fastidiosa (strain 9a5c).